The chain runs to 936 residues: Myocardin-related transcription factor A (936 aa).

3 RPEL repeats span residues 15–40 (TVLQ…PPLK), 59–84 (DYLK…EETS), and 103–128 (DDLN…PVET). The Bipartite Nuclear localization signal signature appears at 62 to 100 (KRKIRSRPERAELVRMHILEETSAEPSLQAKQIKLKRAR). Disordered regions lie at residues 146–185 (SSFD…TQIP), 234–258 (SQPK…KVKK), and 401–422 (SQDP…QAKP). Positions 160 to 170 (QPASQESQGSI) are enriched in polar residues. A compositionally biased stretch (basic and acidic residues) spans 239–254 (SFEKSQRIKKPKEPKP). One can recognise an SAP domain in the interval 368 to 402 (LDEMKVAELKLELKHRGLPVSGTKIDLIERLKASQ). Residues 404–416 (PSTATAASAKPTP) show a composition bias toward low complexity. Positions 497–542 (DARDKDLMLREKDRQIEELTQRLKQKQELVERLRQQLEQEKRTPQH) form a coiled coil. Residues 707–755 (HNESPATPPQQPEPEPPPHSIFLTHSSPQWSKNPPGYDEAMKQQPNSCE) form a disordered region. Over residues 712 to 725 (ATPPQQPEPEPPPH) the composition is skewed to pro residues. Positions 729–738 (LTHSSPQWSK) are enriched in polar residues.

As to quaternary structure, interacts with srf, forming the srf-mrtfa nuclear complex which binds the 5'-CArG-3' consensus motif (CArG box) on DNA via srf. Interacts (via RPEL repeats) with globular actin (G-actin), thereby regulating its subcellular location and activity of the complex formed with srf.

Its subcellular location is the cytoplasm. The protein localises to the nucleus. Its function is as follows. Transcription coactivator that associates with the serum response factor (srf) transcription factor to control expression of genes regulating the cytoskeleton during development, morphogenesis and cell migration. The srf-mrtfa complex activity responds to Rho GTPase-induced changes in cellular globular actin (G-actin) concentration, thereby coupling cytoskeletal gene expression to cytoskeletal dynamics. Mrtfa binds G-actin via its RPEL repeats, regulating activity of the mrtfa-srf complex. Activity is also regulated by filamentous actin (F-actin) in the nucleus. This Xenopus laevis (African clawed frog) protein is Myocardin-related transcription factor A (mrtfa).